A 185-amino-acid polypeptide reads, in one-letter code: Photosystem I assembly protein Ycf4 (185 aa).

A run of 2 helical transmembrane segments spans residues 21-43 (NFFWACILFLGSLGFLSVGISSY) and 68-90 (FYGIAGLFISSYLCCTILWNVGS).

Belongs to the Ycf4 family.

The protein resides in the plastid. The protein localises to the chloroplast thylakoid membrane. In terms of biological role, seems to be required for the assembly of the photosystem I complex. The chain is Photosystem I assembly protein Ycf4 from Aegilops tauschii (Tausch's goatgrass).